A 342-amino-acid chain; its full sequence is Transmembrane protein 268 (342 aa).

A run of 2 helical transmembrane segments spans residues 106–126 (AFAV…SQMF) and 133–153 (AGVL…VLVF). The segment at 245 to 267 (VEGPEDLEDAPLLPSTPGPQERP) is disordered.

In terms of assembly, interacts with ITGAM; this interaction inhibits ITGAM degradation via the endosome-lysosome pathway. Interacts with ITGB4; this interaction prevents ITGB4 degradation.

It is found in the cell membrane. In terms of biological role, stabilizes cell surface expression of ITGAM and participates in the adhesion and migration of phagocytes during bacterial clearance. The sequence is that of Transmembrane protein 268 from Mus musculus (Mouse).